The chain runs to 175 residues: Alpha-crystallin B chain (175 aa).

The residue at position 1 (methionine 1) is an N-acetylmethionine. Serine 19 is modified (phosphoserine). O-linked (GlcNAc) serine glycosylation occurs at serine 41. Residues serine 45 and serine 59 each carry the phosphoserine modification. The region spanning 56–164 is the sHSP domain; that stretch reads RAPSWIDTGL…PERTIPITRE (109 aa). Histidine 83 provides a ligand contact to Zn(2+). Lysine 92 carries the post-translational modification N6-acetyllysine. Histidine 104, glutamate 106, histidine 111, and histidine 119 together coordinate Zn(2+). The segment at 139–175 is disordered; it reads SDGVLTMNGPRKQASGPERTIPITREEKPAVTAAPKK. An N6-acetyllysine modification is found at lysine 166. O-linked (GlcNAc) threonine glycosylation is present at threonine 170.

The protein belongs to the small heat shock protein (HSP20) family. Heteromer composed of three CRYAA and one CRYAB subunits. Aggregates with homologous proteins, including the small heat shock protein HSPB1, to form large heteromeric complexes. Inter-subunit bridging via zinc ions enhances stability, which is crucial as there is no protein turn over in the lens. Interacts with HSPBAP1 and TTN/titin. Interacts with TMEM109; in the cellular response to DNA damage. Interacts with DES; binds rapidly during early stages of DES filament assembly and a reduced binding seen in the later stages. Interacts with ATP6V1A and with MTOR, forming a ternary complex.

The protein localises to the cytoplasm. It is found in the nucleus. Its subcellular location is the secreted. The protein resides in the lysosome. May contribute to the transparency and refractive index of the lens. Has chaperone-like activity, preventing aggregation of various proteins under a wide range of stress conditions. In lens epithelial cells, stabilizes the ATP6V1A protein, preventing its degradation by the proteasome. The chain is Alpha-crystallin B chain (CRYAB) from Ovis aries (Sheep).